A 200-amino-acid polypeptide reads, in one-letter code: A-type ATP synthase subunit E 3 (200 aa).

Belongs to the V-ATPase E subunit family. Has multiple subunits with at least A(3), B(3), C, D, E, F, H, I and proteolipid K(x).

The protein localises to the cell membrane. Its function is as follows. Component of the A-type ATP synthase that produces ATP from ADP in the presence of a proton gradient across the membrane. The protein is A-type ATP synthase subunit E 3 of Methanospirillum hungatei JF-1 (strain ATCC 27890 / DSM 864 / NBRC 100397 / JF-1).